The following is a 1425-amino-acid chain: Neuropathy target esterase sws (1425 aa).

Over 1-34 (MDVLEMLRASASGSYNTIFSDAWCQYVSKQITAT) the chain is Lumenal. Residues 35-55 (VYMYFALVMMSLLFIAWFLYF) form a helical membrane-spanning segment. The Cytoplasmic segment spans residues 56–1425 (KRMARLRLRD…RSSPNNETKN (1370 aa)). 174–301 (IFGHFEKPVF…IRVIQVIMIR (128 aa)) contributes to the a nucleoside 3',5'-cyclic phosphate binding site. Polar residues-rich tracts occupy residues 332 to 348 (TMSG…SRQA) and 357 to 366 (SQMNLMQSAV). The segment at 332-410 (TMSGPINSQT…NPDGSFHGTT (79 aa)) is disordered. The span at 367-381 (SGTGSSGVSVTVTRP) shows a compositional bias: low complexity. Residues Ser444 and Ser453 each carry the phosphoserine modification. Residues 482–609 (ELGL…VVRR) and 598–727 (IVLD…HRFL) each bind a nucleoside 3',5'-cyclic phosphate. The region spanning 952-1118 (LVLGGGGARG…VNNLPADVMH (167 aa)) is the PNPLA domain. A GXGXXG motif is present at residues 956–961 (GGGARG). A GXSXG motif is present at residues 983–987 (GVSIG). Ser985 functions as the Nucleophile in the catalytic mechanism. The active-site Proton acceptor is the Asp1105. The DGA/G motif lies at 1105-1107 (DGG). A Phosphoserine modification is found at Ser1160. Positions 1330–1425 (LERKTDKSTQ…RSSPNNETKN (96 aa)) are disordered. Over residues 1337 to 1347 (STQSSPPSNSR) the composition is skewed to low complexity. A compositionally biased stretch (basic and acidic residues) spans 1348–1358 (SDMRGKEEARH). The span at 1380–1403 (TKTQTGQEQELQQEQQDQGATAEQ) shows a compositional bias: low complexity. Residues 1404–1416 (LVDKDKEENKENR) are compositionally biased toward basic and acidic residues.

This sequence belongs to the NTE family. As to quaternary structure, interacts with Pka-C3; interaction inhibits the catalytic function of Pka-C3 and the esterase activity of sws. In terms of tissue distribution, isoform A and isoform B are expressed in the entire brain cortex; cortical cell bodies of adult brain. Sws and Pka-C3 are colocalized in all neurons.

The protein resides in the endoplasmic reticulum membrane. It catalyses the reaction a 1-acyl-sn-glycero-3-phosphocholine + H2O = sn-glycerol 3-phosphocholine + a fatty acid + H(+). In terms of biological role, phospholipase B that deacylates intracellular phosphatidylcholine (PtdCho), generating glycerophosphocholine (GroPtdCho). This deacylation occurs at both sn-2 and sn-1 positions of PtdCho. Its specific chemical modification by certain organophosphorus (OP) compounds leads to distal axonopathy. Plays a role in the signaling mechanism between neurons and glia that regulates glia wrapping during development of the adult brain. Essential for membrane lipid homeostasis and cell survival in both neurons and glia of the adult brain. In Drosophila melanogaster (Fruit fly), this protein is Neuropathy target esterase sws (sws).